Consider the following 718-residue polypeptide: SANT and BTB domain regulator of class switch recombination (718 aa).

The 39-residue stretch at 21–59 folds into the SANT domain; it reads DMILYPLIGIPQTINWETIARLVPGLTPKECAKRFDELK. Over residues 118-134 the composition is skewed to polar residues; the sequence is ASTRNCSSESENCTTHN. Residues 118 to 142 form a disordered region; the sequence is ASTRNCSSESENCTTHNGGEMTEES. A BTB domain is found at 147–255; that stretch reads MVIHVCDEAK…QCIQYCHKNM (109 aa). Residues 555 to 576 show a composition bias toward acidic residues; that stretch reads SEEEEYTTGSEVTEDEVGDEEE. Disordered stretches follow at residues 555–622 and 692–718; these read SEEE…SPFV and SVPVSARQSSSEKNTRSKSRFGQGRPA. The segment covering 580–595 has biased composition (basic residues); that stretch reads KQRKKEKPKKFTRQPK. The span at 604–615 shows a compositional bias: basic and acidic residues; that stretch reads QRKEKALEKSAS.

This sequence belongs to the KIAA1841 family. Homodimer. Interacts (via the BTB domain) with HDAC1 and NCOR2.

In terms of biological role, negatively regulates class switch recombination or isotype switching in splenic B-cells. The protein is SANT and BTB domain regulator of class switch recombination of Homo sapiens (Human).